Consider the following 310-residue polypeptide: N-acetyl-gamma-glutamyl-phosphate reductase (310 aa).

Cys117 is a catalytic residue.

The protein belongs to the NAGSA dehydrogenase family. Type 2 subfamily.

Its subcellular location is the cytoplasm. The catalysed reaction is N-acetyl-L-glutamate 5-semialdehyde + phosphate + NADP(+) = N-acetyl-L-glutamyl 5-phosphate + NADPH + H(+). It functions in the pathway amino-acid biosynthesis; L-arginine biosynthesis; N(2)-acetyl-L-ornithine from L-glutamate: step 3/4. Catalyzes the NADPH-dependent reduction of N-acetyl-5-glutamyl phosphate to yield N-acetyl-L-glutamate 5-semialdehyde. The polypeptide is N-acetyl-gamma-glutamyl-phosphate reductase (Brucella melitensis biotype 1 (strain ATCC 23456 / CCUG 17765 / NCTC 10094 / 16M)).